The following is a 235-amino-acid chain: Protein LIFEGUARD 1 (235 aa).

7 consecutive transmembrane segments (helical) span residues 33–53 (YSIL…VYFV), 67–87 (LAVF…LLAF), 95–115 (CIVL…CCSL), 120–140 (IVLE…IYTF), 149–169 (FSFL…FTLL), 178–198 (LSSM…IIFD), and 212–232 (ITAA…LLGI).

The protein belongs to the BI1 family. In terms of tissue distribution, expressed at very low in leaves.

The protein resides in the membrane. In terms of biological role, (Microbial infection) Facilitates the development of the powdery mildew fungus E.cruciferarum. Its function is as follows. (Microbial infection) May prevent cell death upon A.alternata f.sp. lycopersici (AAL) toxin treatment. The chain is Protein LIFEGUARD 1 from Arabidopsis thaliana (Mouse-ear cress).